A 394-amino-acid chain; its full sequence is NAD(P)H-quinone oxidoreductase subunit H (394 aa).

Belongs to the complex I 49 kDa subunit family. In terms of assembly, NDH-1 can be composed of about 15 different subunits; different subcomplexes with different compositions have been identified which probably have different functions.

It is found in the cellular thylakoid membrane. It catalyses the reaction a plastoquinone + NADH + (n+1) H(+)(in) = a plastoquinol + NAD(+) + n H(+)(out). The catalysed reaction is a plastoquinone + NADPH + (n+1) H(+)(in) = a plastoquinol + NADP(+) + n H(+)(out). Functionally, NDH-1 shuttles electrons from an unknown electron donor, via FMN and iron-sulfur (Fe-S) centers, to quinones in the respiratory and/or the photosynthetic chain. The immediate electron acceptor for the enzyme in this species is believed to be plastoquinone. Couples the redox reaction to proton translocation, and thus conserves the redox energy in a proton gradient. Cyanobacterial NDH-1 also plays a role in inorganic carbon-concentration. In Trichormus variabilis (strain ATCC 29413 / PCC 7937) (Anabaena variabilis), this protein is NAD(P)H-quinone oxidoreductase subunit H.